Reading from the N-terminus, the 274-residue chain is Small nuclear ribonucleoprotein-associated protein B (274 aa).

The region spanning 5 to 85 (PKSSKMLQYI…VVSMSVEAPP (81 aa)) is the Sm domain. Positions 148–274 (PGGGVPPPMG…PMGRGGFQRK (127 aa)) are disordered. Residues 162-171 (PPQGFPPGGP) form repeat 1. The segment at 162-265 (PPQGFPPGGP…PPQGFPPGGP (104 aa)) is 6 X 10 AA repeats of P-P-Q-G-F-P-P-G-G-P. Low complexity predominate over residues 173–187 (PQGAFNNNPNNNNGG). Repeat copies occupy residues 188–197 (PPQGFPPGGP), 204–213 (PPQGFPPGGP), 225–234 (PPQGFPPGGP), 241–250 (PPQGFPPGGP), and 256–265 (PPQGFPPGGP). Over residues 216 to 226 (GPNLNNGNMPP) the composition is skewed to low complexity. Residues 265-274 (PMGRGGFQRK) show a composition bias toward gly residues.

The protein belongs to the snRNP SmB/SmN family.

It localises to the cytoplasm. The protein localises to the cytosol. It is found in the nucleus. Its function is as follows. Plays a role in pre-mRNA splicing as a core component of the spliceosomal U1, U2, U4 and U5 small nuclear ribonucleoproteins (snRNPs), the building blocks of the spliceosome. This is Small nuclear ribonucleoprotein-associated protein B (snrpb) from Dictyostelium discoideum (Social amoeba).